A 317-amino-acid chain; its full sequence is Acetyl-coenzyme A carboxylase carboxyl transferase subunit alpha (317 aa).

A CoA carboxyltransferase C-terminal domain is found at 33-294 (NLDDEIARLQ…KQRLLDDLKE (262 aa)).

Belongs to the AccA family. In terms of assembly, acetyl-CoA carboxylase is a heterohexamer composed of biotin carboxyl carrier protein (AccB), biotin carboxylase (AccC) and two subunits each of ACCase subunit alpha (AccA) and ACCase subunit beta (AccD).

The protein resides in the cytoplasm. It carries out the reaction N(6)-carboxybiotinyl-L-lysyl-[protein] + acetyl-CoA = N(6)-biotinyl-L-lysyl-[protein] + malonyl-CoA. It functions in the pathway lipid metabolism; malonyl-CoA biosynthesis; malonyl-CoA from acetyl-CoA: step 1/1. Component of the acetyl coenzyme A carboxylase (ACC) complex. First, biotin carboxylase catalyzes the carboxylation of biotin on its carrier protein (BCCP) and then the CO(2) group is transferred by the carboxyltransferase to acetyl-CoA to form malonyl-CoA. This Pasteurella multocida (strain Pm70) protein is Acetyl-coenzyme A carboxylase carboxyl transferase subunit alpha.